The following is a 364-amino-acid chain: Fructose-bisphosphate aldolase B (364 aa).

Residue A2 is modified to N-acetylalanine. K13 carries the N6-succinyllysine modification. S36 is modified (phosphoserine). A Phosphothreonine modification is found at T39. Residue R43 participates in beta-D-fructose 1,6-bisphosphate binding. Phosphoserine is present on S89. A Phosphothreonine modification is found at T119. At K121 the chain carries N6-succinyllysine. Residue S132 is modified to Phosphoserine. E188 functions as the Proton acceptor in the catalytic mechanism. The active-site Schiff-base intermediate with dihydroxyacetone-P is K230. Phosphoserine occurs at positions 272, 276, 299, and 301. 272 to 274 (SGG) contributes to the beta-D-fructose 1,6-bisphosphate binding site. Beta-D-fructose 1,6-bisphosphate is bound at residue R304. S309 bears the Phosphoserine mark. N6-succinyllysine is present on K317.

The protein belongs to the class I fructose-bisphosphate aldolase family. As to quaternary structure, homotetramer. Interacts with BBS1, BBS2, BBS4 and BBS7. Forms a ternary complex with G6PD and TP53; this interaction is direct.

It localises to the cytoplasm. It is found in the cytosol. Its subcellular location is the cytoskeleton. The protein resides in the microtubule organizing center. The protein localises to the centrosome. It localises to the centriolar satellite. The catalysed reaction is beta-D-fructose 1,6-bisphosphate = D-glyceraldehyde 3-phosphate + dihydroxyacetone phosphate. The enzyme catalyses beta-D-fructose 1-phosphate = D-glyceraldehyde + dihydroxyacetone phosphate. The protein operates within carbohydrate degradation; glycolysis; D-glyceraldehyde 3-phosphate and glycerone phosphate from D-glucose: step 4/4. It participates in carbohydrate biosynthesis; gluconeogenesis. It functions in the pathway carbohydrate metabolism; fructose metabolism. In terms of biological role, catalyzes the aldol cleavage of fructose 1,6-biphosphate to form two triosephosphates dihydroxyacetone phosphate and D-glyceraldehyde 3-phosphate in glycolysis as well as the reverse stereospecific aldol addition reaction in gluconeogenesis. In fructolysis, metabolizes fructose 1-phosphate derived from the phosphorylation of dietary fructose by fructokinase into dihydroxyacetone phosphate and D-glyceraldehyde. Acts as an adapter independently of its enzymatic activity, exerts a tumor suppressor role by stabilizing the ternary complex with G6PD and TP53 to inhibit G6PD activity and keep oxidative pentose phosphate metabolism in check. The sequence is that of Fructose-bisphosphate aldolase B (Aldob) from Rattus norvegicus (Rat).